The primary structure comprises 233 residues: Protease inhibitor Egf1.0 (233 aa).

The first 28 residues, 1–28 (MYIDTGIMSNNIFLFAFFALVGLTRIEA), serve as a signal peptide directing secretion. The TIL domain maps to 52–104 (CRENEHYNSTRIECEEECNDRNNKLCYRFQQFCWCNEGYIRNSSHICVKLEDC). The interval 201–233 (FGKPKNSSAEKKPLETETQAQKFNGIIDQETLD) is disordered.

It belongs to the polydnaviridae EGF-like motif protein family. In terms of assembly, interacts with host PAP1 and PAP3.

Counteracts the host humoral immune response by inhibiting the processing and the amidolytic activity of host PAP3. Thereby, melanization of host hemolymph, normally producing several reactive intermediates toxic for viruses, is deregulated and proper immune response cannot occur. This chain is Protease inhibitor Egf1.0 (O12), found in Microplitis demolitor (Parasitoid wasp).